A 131-amino-acid chain; its full sequence is Small ribosomal subunit protein uS11 (131 aa).

Belongs to the universal ribosomal protein uS11 family. Part of the 30S ribosomal subunit. Interacts with proteins S7 and S18. Binds to IF-3.

Its function is as follows. Located on the platform of the 30S subunit, it bridges several disparate RNA helices of the 16S rRNA. Forms part of the Shine-Dalgarno cleft in the 70S ribosome. This Dictyoglomus turgidum (strain DSM 6724 / Z-1310) protein is Small ribosomal subunit protein uS11.